The following is a 318-amino-acid chain: D-alanine--D-alanine ligase (318 aa).

Residues 116 to 315 (KQVWQSLGLP…FEQLSLAVLA (200 aa)) form the ATP-grasp domain. An ATP-binding site is contributed by 146–201 (MSRLGDLVMVKPAQEGSSIGMAKVSNAQQLAAAIQQAFEYDDKVLLEQFIQGSEYT). Residues Asp269, Glu282, and Asn284 each coordinate Mg(2+).

This sequence belongs to the D-alanine--D-alanine ligase family. Mg(2+) serves as cofactor. The cofactor is Mn(2+).

Its subcellular location is the cytoplasm. The catalysed reaction is 2 D-alanine + ATP = D-alanyl-D-alanine + ADP + phosphate + H(+). It functions in the pathway cell wall biogenesis; peptidoglycan biosynthesis. In terms of biological role, cell wall formation. The protein is D-alanine--D-alanine ligase of Pseudoalteromonas atlantica (strain T6c / ATCC BAA-1087).